The chain runs to 162 residues: Large ribosomal subunit protein bL17 (162 aa).

Residues Arg-118 to Glu-162 are disordered. Basic and acidic residues predominate over residues Ala-126–Glu-162.

It belongs to the bacterial ribosomal protein bL17 family. In terms of assembly, part of the 50S ribosomal subunit. Contacts protein L32.

This chain is Large ribosomal subunit protein bL17, found in Anaeromyxobacter dehalogenans (strain 2CP-C).